The primary structure comprises 465 residues: Siroheme synthase (465 aa).

The segment at 1 to 203 is precorrin-2 dehydrogenase /sirohydrochlorin ferrochelatase; sequence MEYLPLFHNL…GRTAEAERLL (203 aa). Residues 22–23 and 43–44 each bind NAD(+); these read EI and PS. Ser128 carries the post-translational modification Phosphoserine. Positions 216-465 are uroporphyrinogen-III C-methyltransferase; sequence GEVYLVGAGP…WFEGAQAAGR (250 aa). S-adenosyl-L-methionine is bound at residue Pro225. The active-site Proton acceptor is Asp248. Lys270 functions as the Proton donor in the catalytic mechanism. S-adenosyl-L-methionine-binding positions include 301–303, Ile306, 331–332, Met383, and Gly412; these read GGD and TA.

It in the N-terminal section; belongs to the precorrin-2 dehydrogenase / sirohydrochlorin ferrochelatase family. In the C-terminal section; belongs to the precorrin methyltransferase family.

The enzyme catalyses uroporphyrinogen III + 2 S-adenosyl-L-methionine = precorrin-2 + 2 S-adenosyl-L-homocysteine + H(+). It catalyses the reaction precorrin-2 + NAD(+) = sirohydrochlorin + NADH + 2 H(+). The catalysed reaction is siroheme + 2 H(+) = sirohydrochlorin + Fe(2+). It functions in the pathway cofactor biosynthesis; adenosylcobalamin biosynthesis; precorrin-2 from uroporphyrinogen III: step 1/1. It participates in cofactor biosynthesis; adenosylcobalamin biosynthesis; sirohydrochlorin from precorrin-2: step 1/1. The protein operates within porphyrin-containing compound metabolism; siroheme biosynthesis; precorrin-2 from uroporphyrinogen III: step 1/1. Its pathway is porphyrin-containing compound metabolism; siroheme biosynthesis; siroheme from sirohydrochlorin: step 1/1. It functions in the pathway porphyrin-containing compound metabolism; siroheme biosynthesis; sirohydrochlorin from precorrin-2: step 1/1. Functionally, multifunctional enzyme that catalyzes the SAM-dependent methylations of uroporphyrinogen III at position C-2 and C-7 to form precorrin-2 via precorrin-1. Then it catalyzes the NAD-dependent ring dehydrogenation of precorrin-2 to yield sirohydrochlorin. Finally, it catalyzes the ferrochelation of sirohydrochlorin to yield siroheme. In Stutzerimonas stutzeri (strain A1501) (Pseudomonas stutzeri), this protein is Siroheme synthase.